The primary structure comprises 257 residues: G2/mitotic-specific cyclin S13-7 (257 aa).

It belongs to the cyclin family. Cyclin AB subfamily. In terms of assembly, interacts with the CDC2 protein kinase to form a serine/threonine kinase holoenzyme complex also known as maturation promoting factor (MPF). The cyclin subunit imparts substrate specificity to the complex.

In terms of biological role, essential for the control of the cell cycle at the G2/M (mitosis) transition. This is G2/mitotic-specific cyclin S13-7 from Glycine max (Soybean).